Reading from the N-terminus, the 232-residue chain is Orotidine 5'-phosphate decarboxylase (232 aa).

Residues aspartate 16, lysine 38, 65 to 74 (DLKLHDIGNT), threonine 119, arginine 180, glutamine 189, glycine 209, and arginine 210 each bind substrate. Lysine 67 serves as the catalytic Proton donor.

The protein belongs to the OMP decarboxylase family. Type 1 subfamily. As to quaternary structure, homodimer.

The catalysed reaction is orotidine 5'-phosphate + H(+) = UMP + CO2. It participates in pyrimidine metabolism; UMP biosynthesis via de novo pathway; UMP from orotate: step 2/2. Catalyzes the decarboxylation of orotidine 5'-monophosphate (OMP) to uridine 5'-monophosphate (UMP). The sequence is that of Orotidine 5'-phosphate decarboxylase from Methylorubrum populi (strain ATCC BAA-705 / NCIMB 13946 / BJ001) (Methylobacterium populi).